A 73-amino-acid chain; its full sequence is Stigmurin (73 aa).

Positions 1–22 are cleaved as a signal peptide; the sequence is MQIKHLITLFFLVLIVADQCSA. Residue lysine 39 is modified to Lysine amide. The propeptide occupies 45 to 73; that stretch reads EISAQIEQYKDLQKREAELEKLLDRLPMY.

It belongs to the non-disulfide-bridged peptide (NDBP) superfamily. Short antimicrobial peptide (group 4) family. In terms of tissue distribution, expressed by the venom gland.

It localises to the secreted. Its function is as follows. Antimicrobial peptide with activity against Gram-positive bacterial strains (S.aureus (MIC=2-140 uM), methicillin-resistant S.aureus (MRSA) (MIC=8-17 uM), S.epidermidis (MIC=1.17 uM), and the yeasts C.albicans, C.krusei, and C.glabrata (MIC=34-69 uM)). Acts by disrupting the cell membrane (observed on outer layer of the S.aureus). Is not active against Gram-negative bacteria (E.coli, E.Cloacae, P.aeruginosa), and the Gram-positive bacterium E.faecalis. Also shows toxicity against several cell lines, but possess low hemolytic activity at the highest concentration tested. Also shows antiparasitic activity against Trypanosoma cruzi by decreasing the viability of the epimastigote and trypomastigote forms of the parasite. Displays high hydroxyl radical scavenging activity (antioxidant action). In a wound infection model, the topical application of this peptide demonstrates antibacterial effects, as well as an ability to accelerate wound closure speed, which suggests the induction of tissue repair. In the model of polymicrobial sepsis, it exhibits an antibiotic effect, reducing the levels of microorganisms in the infectious focus and the inflammatory responses in the lung and cecum of septic animals. The protein is Stigmurin of Tityus stigmurus (Brazilian scorpion).